The sequence spans 125 residues: Large ribosomal subunit protein bL12 (125 aa).

The protein belongs to the bacterial ribosomal protein bL12 family. Homodimer. Part of the ribosomal stalk of the 50S ribosomal subunit. Forms a multimeric L10(L12)X complex, where L10 forms an elongated spine to which 2 to 4 L12 dimers bind in a sequential fashion. Binds GTP-bound translation factors.

Its function is as follows. Forms part of the ribosomal stalk which helps the ribosome interact with GTP-bound translation factors. Is thus essential for accurate translation. In Dictyoglomus thermophilum (strain ATCC 35947 / DSM 3960 / H-6-12), this protein is Large ribosomal subunit protein bL12.